Consider the following 81-residue polypeptide: Beta-toxin Ct13 (81 aa).

The N-terminal stretch at 1 to 18 (MKVLILIIASVLLIGVEC) is a signal peptide. The region spanning 19–78 (KDGFPVDSEGCILLPCATRAYCSVNCKFMKGSGGSCDTLACHCKGLPEDAKVQDKPTNKC) is the LCN-type CS-alpha/beta domain. Cystine bridges form between C29–C78, C34–C54, C40–C59, and C44–C61. C78 bears the Cysteine amide mark.

It belongs to the long (4 C-C) scorpion toxin superfamily. Sodium channel inhibitor family. Beta subfamily. Expressed by the venom gland.

The protein resides in the secreted. Beta toxins bind voltage-independently at site-4 of sodium channels (Nav) and shift the voltage of activation toward more negative potentials thereby affecting sodium channel activation and promoting spontaneous and repetitive firing. The sequence is that of Beta-toxin Ct13 from Centruroides tecomanus (Scorpion).